We begin with the raw amino-acid sequence, 754 residues long: ToMV resistance protein Tm-1(GCR237) (754 aa).

Residues 1–201 form an N-terminal inhibitory domain NN region; sequence MATAQSNSPR…AGMVIGRLES (201 aa). ATP is bound by residues 18 to 20, Thr55, Arg92, and 124 to 127; these read DTK and GSGG. The N-terminal inhibitory domain NC stretch occupies residues 211–431; that stretch reads KFTVGVTMFG…VDSFLEISPK (221 aa).

Belongs to the UPF0261 family. As to quaternary structure, homodimer. (Microbial infection) Binds, via an ATP bridge, to the tobamoviruses avirulent (Avr) replication proteins (large and small subunits, e.g. tomato mosaic virus (ToMV/TMV) AC P03587, tobacco mild green mosaic virus (TMGMV) AC P18339 and pepper mild mottle virus (PMMoV) AC P89657) to inhibit their function after the translation of tobamoviruses RNA, but before the viral replication complex formation on the membrane surfaces; this interaction is not possible with resistance-breaking strains replication proteins.

In terms of biological role, inhibitor of viral RNA replication which confers resistance to some tobamoviruses including tomato mosaic virus (ToMV) (e.g. isolate L), tobacco mosaic virus (TMV), tobacco mild green mosaic virus (TMGMV) and pepper mild mottle virus (PMMoV), but not to resistance-breaking isolates of ToMV (e.g. LT1, SL-1 and ToMV1-2) and tomato brown rugose fruit virus (ToBRFV). Prevents tobamoviruses RNA replication by affecting the association of tobamoviruses replication proteins (large and small subunits) with host membrane-associated proteins (e.g. TOM1, TOM2A and ARL8), thus inhibiting the replication complex formation on the membranes and avoiding viral negative-strand RNA synthesis. Inhibits triphosphatase activity of ToMV replication proteins. In Solanum lycopersicum (Tomato), this protein is ToMV resistance protein Tm-1(GCR237).